Here is a 689-residue protein sequence, read N- to C-terminus: Translation initiation factor IF-2 (689 aa).

The segment at 70–107 (VRSKKNSNKKKKKGKGNQDKRQENFAGKQQAQTVETPD) is disordered. Over residues 71 to 84 (RSKKNSNKKKKKGK) the composition is skewed to basic residues. In terms of domain architecture, tr-type G spans 191 to 360 (ERPAVVTIMG…LLVSEVEEYK (170 aa)). Positions 200 to 207 (GHVDHGKT) are G1. 200 to 207 (GHVDHGKT) is a binding site for GTP. The interval 225–229 (GITQH) is G2. The tract at residues 246–249 (DTPG) is G3. GTP is bound by residues 246 to 250 (DTPGH) and 300 to 303 (NKMD). The tract at residues 300 to 303 (NKMD) is G4. A G5 region spans residues 336–338 (SAI).

Belongs to the TRAFAC class translation factor GTPase superfamily. Classic translation factor GTPase family. IF-2 subfamily.

The protein localises to the cytoplasm. One of the essential components for the initiation of protein synthesis. Protects formylmethionyl-tRNA from spontaneous hydrolysis and promotes its binding to the 30S ribosomal subunits. Also involved in the hydrolysis of GTP during the formation of the 70S ribosomal complex. This chain is Translation initiation factor IF-2, found in Bacillus cytotoxicus (strain DSM 22905 / CIP 110041 / 391-98 / NVH 391-98).